We begin with the raw amino-acid sequence, 178 residues long: Epididymal-specific lipocalin-9 (178 aa).

An N-terminal signal peptide occupies residues 1–16 (MVLLLVLGLVLSLATA). Residues asparagine 46, asparagine 68, and asparagine 129 are each glycosylated (N-linked (GlcNAc...) asparagine). A disulfide bridge connects residues cysteine 83 and cysteine 176.

This sequence belongs to the calycin superfamily. Lipocalin family. As to expression, expressed in epididymis. Not detected in all other tissues tested.

Its subcellular location is the secreted. The protein is Epididymal-specific lipocalin-9 (Lcn9) of Mus musculus (Mouse).